Consider the following 374-residue polypeptide: MATLCRPSVSVPEHVITMEETLELARRRHTDHPQLPLALRLIENTGVRTRHIVQPIEDTLEHPGFEDRNKVYEREAKSRVPAVIQRALDDAELLATDIDVIIYVSCTGFMMPSLTAWLINEMGFDSTTRQIPIAQLGCAAGGAAINRAHDFCTAYPEANALIVACEFCSLCYQPTDLGVGSLLCNGLFGDGIAAAVVRGRGGTGVRLERNGSYLIPKTEDWIMYDVKATGFHFLLDKRVPATMEPLAPALKELAGEHGWDASDLDFYIVHAGGPRILDDLSTFLEVDPHAFRFSRATLTEYGNIASAVVLDALRRLFDEGGVEEGARGLLAGFGPGITAEMSLGCWQTADVRRGIRQDVTRTAARGVSRRVRQA.

The active site involves C138.

The protein belongs to the thiolase-like superfamily. Chalcone/stilbene synthases family. As to quaternary structure, homodimer.

The catalysed reaction is 5 malonyl-CoA + 5 H(+) = naphthalene-1,3,6,8-tetrol + 5 CO2 + 5 CoA + H2O. It participates in pigment biosynthesis; melanin biosynthesis. In terms of biological role, involved in the biosynthesis of melanin but also various secondary metabolites containing a naphthoquinone ring. Catalyzes the iterative condensation of five CoA-linked malonyl units to form a pentaketide intermediate. THNS subsequently catalyzes the dual intramolecular Claisen and aldol condensations of this linear intermediate to produce the fused ring of 1,3,6,8-tetrahydroxynaphthalene (THN). This Streptomyces coelicolor (strain ATCC BAA-471 / A3(2) / M145) protein is 1,3,6,8-tetrahydroxynaphthalene synthase.